The following is a 575-amino-acid chain: U3 small nucleolar RNA-associated protein 9 (575 aa).

2 stretches are compositionally biased toward basic and acidic residues: residues 340-355 and 364-375; these read NEKN…KLEE and VQHEKKETETKI. Positions 340–375 are disordered; that stretch reads NEKNNADEADQKKLEEKEEEAQPEVQHEKKETETKI. Residues S547 and S564 each carry the phosphoserine modification.

Interacts with snoRNA U3. Interacts with MPP10. Component of the ribosomal small subunit (SSU) processome composed of at least 40 protein subunits and snoRNA U3. In the absence of snoRNA3, forms a complex with other t-UTPs. This complex can associate with pre-18S ribosomal RNAs.

The protein resides in the nucleus. It is found in the nucleolus. In terms of biological role, involved in nucleolar processing of pre-18S ribosomal RNA. Required for optimal pre-ribosomal RNA transcription by RNA polymerase I together with a subset of U3 proteins required for transcription (t-UTPs). In Saccharomyces cerevisiae (strain ATCC 204508 / S288c) (Baker's yeast), this protein is U3 small nucleolar RNA-associated protein 9 (UTP9).